The following is a 649-amino-acid chain: DNA mismatch repair protein MutL (649 aa).

This sequence belongs to the DNA mismatch repair MutL/HexB family.

In terms of biological role, this protein is involved in the repair of mismatches in DNA. It is required for dam-dependent methyl-directed DNA mismatch repair. May act as a 'molecular matchmaker', a protein that promotes the formation of a stable complex between two or more DNA-binding proteins in an ATP-dependent manner without itself being part of a final effector complex. The polypeptide is DNA mismatch repair protein MutL (Streptococcus pneumoniae (strain P1031)).